Reading from the N-terminus, the 376-residue chain is Copper-containing nitrite reductase (376 aa).

A signal peptide (tat-type signal) is located at residues 1–33 (MAEQMQISRRTILAGAALAGALAPVLATTSAWG). Pyrrolidone carboxylic acid is present on Gln34. Plastocyanin-like domains are found at residues 34–211 (QGAV…YDKI) and 212–376 (YYVG…PSGT). The Cu cation site is built by His131, His136, His171, Cys172, His181, Met186, and His342.

It belongs to the multicopper oxidase family. As to quaternary structure, homotrimer. The cofactor is Cu(2+). Requires Cu(+) as cofactor. It depends on FAD as a cofactor. Predicted to be exported by the Tat system. The position of the signal peptide cleavage has been experimentally proven.

It localises to the periplasm. The catalysed reaction is nitric oxide + Fe(III)-[cytochrome c] + H2O = Fe(II)-[cytochrome c] + nitrite + 2 H(+). The protein operates within nitrogen metabolism; nitrate reduction (denitrification); dinitrogen from nitrate: step 2/4. The protein is Copper-containing nitrite reductase (nirK) of Alcaligenes faecalis.